A 127-amino-acid chain; its full sequence is Major sperm protein 78 (127 aa).

N-acetylalanine is present on Ala2. An MSP domain is found at 9–126; sequence DIQTQPGTKI…RRKNLPIEYN (118 aa).

Sperm.

It localises to the cell projection. The protein localises to the pseudopodium. Its subcellular location is the cytoplasm. The protein resides in the cytoskeleton. Its function is as follows. Central component in molecular interactions underlying sperm crawling. Forms an extensive filament system that extends from sperm villipoda, along the leading edge of the pseudopod. The polypeptide is Major sperm protein 78 (msp-78) (Caenorhabditis elegans).